Reading from the N-terminus, the 385-residue chain is ADP,ATP carrier protein 2, mitochondrial (385 aa).

The N-terminal 74 residues, 1–74 (MVEQTQHPTI…ATTTSPVFVQ (74 aa)), are a transit peptide targeting the mitochondrion. 3 Solcar repeats span residues 82–175 (TNFA…FKRL), 187–280 (KWFA…VKPV), and 288–374 (DSFF…LQLI). The next 5 helical transmembrane spans lie at 84–111 (FAID…VKLL), 152–176 (TANV…KRLF), 185–205 (YWKW…SSLL), 256–277 (FNIS…YDSV), and 291–311 (FASF…SYPI). ADP-binding residues include Arg157 and Lys169. ADP is bound at residue Arg315. The interval 315-320 (RRRMMM) is important for transport activity. Positions 315–320 (RRRMMM) match the Nucleotide carrier signature motif motif. A helical membrane pass occupies residues 351 to 371 (AGANILRAVAGAGVLAGYDKL).

This sequence belongs to the mitochondrial carrier (TC 2.A.29) family. Monomer.

Its subcellular location is the mitochondrion inner membrane. The enzyme catalyses ADP(in) + ATP(out) = ADP(out) + ATP(in). The matrix-open state (m-state) is inhibited by the membrane-permeable bongkrekic acid (BKA). The cytoplasmic-open state (c-state) is inhibited by the membrane-impermeable toxic inhibitor carboxyatractyloside (CATR). In terms of biological role, ADP:ATP antiporter that mediates import of ADP into the mitochondrial matrix for ATP synthesis, and export of ATP out to fuel the cell. Cycles between the cytoplasmic-open state (c-state) and the matrix-open state (m-state): operates by the alternating access mechanism with a single substrate-binding site intermittently exposed to either the cytosolic (c-state) or matrix (m-state) side of the inner mitochondrial membrane. The chain is ADP,ATP carrier protein 2, mitochondrial (AAC2) from Arabidopsis thaliana (Mouse-ear cress).